A 217-amino-acid chain; its full sequence is Large ribosomal subunit protein uL1 (217 aa).

The protein belongs to the universal ribosomal protein uL1 family. Part of the 50S ribosomal subunit.

Functionally, binds directly to 23S rRNA. The L1 stalk is quite mobile in the ribosome, and is involved in E site tRNA release. Its function is as follows. Protein L1 is also a translational repressor protein, it controls the translation of the L11 operon by binding to its mRNA. The sequence is that of Large ribosomal subunit protein uL1 from Wolbachia pipientis wMel.